Consider the following 666-residue polypeptide: Non-receptor tyrosine-protein kinase TNK1 (666 aa).

Ser-96 carries the post-translational modification Phosphoserine. In terms of domain architecture, Protein kinase spans Val-116–Leu-383. ATP-binding positions include Leu-122 to Val-130 and Lys-148. The Proton acceptor role is filled by Asp-245. Position 255 is a phosphoserine (Ser-255). In terms of domain architecture, SH3 spans Ala-381–Leu-441. The disordered stretch occupies residues Gly-442 to Pro-589. Basic and acidic residues predominate over residues His-457–Thr-473. Ser-498 bears the Phosphoserine mark. Thr-510 is subject to Phosphothreonine. The residue at position 515 (Ser-515) is a Phosphoserine. Residues Asp-531 to Pro-544 are compositionally biased toward pro residues. At Ser-582 the chain carries Phosphoserine.

It belongs to the protein kinase superfamily. Tyr protein kinase family. Interacts with the SH3 domain of PLCG1 via its Pro-rich domain. Post-translationally, autophosphorylated on tyrosine residues. Expressed in whole embryo and all adult tissues examined including liver, kidney, heart, brain, skeletal muscle and intestine. Also detected in various myeloid- and lymphoid-derived cell lines.

It localises to the membrane. The protein resides in the cytoplasm. The catalysed reaction is L-tyrosyl-[protein] + ATP = O-phospho-L-tyrosyl-[protein] + ADP + H(+). In terms of biological role, may function in signaling pathways utilized broadly during fetal development and more selectively in adult tissues and in cells of the lymphohematopoietic system. Could specifically be involved in phospholipid signal transduction. Involved in negative regulation of cell growth. Has tumor suppressor properties. Plays a negative regulatory role in the Ras-MAPK pathway. The chain is Non-receptor tyrosine-protein kinase TNK1 from Mus musculus (Mouse).